Reading from the N-terminus, the 425-residue chain is Serine--tRNA ligase (425 aa).

An L-serine-binding site is contributed by 233–235; the sequence is TAE. An ATP-binding site is contributed by 264–266; it reads RRE. Position 287 (glutamate 287) interacts with L-serine. Residue 351–354 participates in ATP binding; sequence EISS. Position 387 (serine 387) interacts with L-serine.

Belongs to the class-II aminoacyl-tRNA synthetase family. Type-1 seryl-tRNA synthetase subfamily. Homodimer. The tRNA molecule binds across the dimer.

The protein resides in the cytoplasm. The catalysed reaction is tRNA(Ser) + L-serine + ATP = L-seryl-tRNA(Ser) + AMP + diphosphate + H(+). The enzyme catalyses tRNA(Sec) + L-serine + ATP = L-seryl-tRNA(Sec) + AMP + diphosphate + H(+). It functions in the pathway aminoacyl-tRNA biosynthesis; selenocysteinyl-tRNA(Sec) biosynthesis; L-seryl-tRNA(Sec) from L-serine and tRNA(Sec): step 1/1. In terms of biological role, catalyzes the attachment of serine to tRNA(Ser). Is also able to aminoacylate tRNA(Sec) with serine, to form the misacylated tRNA L-seryl-tRNA(Sec), which will be further converted into selenocysteinyl-tRNA(Sec). This chain is Serine--tRNA ligase, found in Thermotoga neapolitana (strain ATCC 49049 / DSM 4359 / NBRC 107923 / NS-E).